The chain runs to 396 residues: Glyceraldehyde-3-phosphate dehydrogenase GAPA1, chloroplastic (396 aa).

Residues 1–60 (MASVTFSVPKGFTEFSGLRSSSASLPFGKKLSSDEFVSIVSFQTSAMGSSGGYRKGVTEA) constitute a chloroplast transit peptide. Residues 71–72 (RI), Asp-95, and Arg-140 each bind NADP(+). Residues 212-214 (SCT), Thr-243, Arg-258, 271-272 (TG), and Arg-294 contribute to the D-glyceraldehyde 3-phosphate site. Cys-213 acts as the Nucleophile in catalysis. Asn-376 provides a ligand contact to NADP(+).

Belongs to the glyceraldehyde-3-phosphate dehydrogenase family. Tetramer of either four A chains (GAPDH 2) or two A and two B chains (GAPDH 1). Expressed in leaves and stems.

It localises to the plastid. The protein localises to the chloroplast membrane. The protein resides in the chloroplast stroma. It catalyses the reaction D-glyceraldehyde 3-phosphate + phosphate + NADP(+) = (2R)-3-phospho-glyceroyl phosphate + NADPH + H(+). It functions in the pathway carbohydrate biosynthesis; Calvin cycle. Involved in the photosynthetic reductive pentose phosphate pathway (Calvin-Benson cycle). Catalyzes the reduction of 1,3-diphosphoglycerate by NADPH. This is Glyceraldehyde-3-phosphate dehydrogenase GAPA1, chloroplastic (GAPA1) from Arabidopsis thaliana (Mouse-ear cress).